Consider the following 885-residue polypeptide: MDVEEDDLCLLTSLLEENEAVLPCSSEKDKSLSLGDGDPDEFDELFDADGDGESYTEEAGSGEEGKTGNQEERLATLFGDVEDLTDDEVATSKVGNSGPPPAPSQEKTSEELQDELKKLQEQMKSLQEQLKAASIKQPPGTAPLQEPPDSSLQPLLKEKRIRRIQESACFSAELDVPTLPKAKRVARKPKTPAESSSRMRTPAQPLQVSSSFLEPNHSSSSRSSTPSPQAVPGNKCSRTIRNQNTVSPGNSGDRPQQVSQVSVEAFSGLRLRRPRVSSTEMSRKMAGRKLIRLPQIKEKMATENLEETDWVTFGVILRKVTPQSATSGQTFSIWKLNDLHDLTQCVSLFLFGDVHKDLWKTEQGTVIGLLNANPMKPKDGLKEVCLSIDHPQKVLIMGEAMDLGACKAKKKNGEPCTQTVNLHDCEYCQYHIQAQYKKLSAKRTDLQSTFSGGRIPKKFRKGTSLKERLCQDGFYYGGVSSESFAASRAAAIAPKKKVQTTLTNLVVRGTNSIIQETKQKLGIPQKSLSCSEEFRELMALPTFGARNLQKHLARAKASGSSKPAIQSISASALLKQQKQQMLEMRKRRSEDIQKRFLQSSSEVQSPAVPSSSRQAAAQSPRTGAEFPRLEGTATPRMPKLGRGISEGDDVLFFDDSPPPRPKLSAAAEAKKLAAIAKLRAKGQILTKVDPNNTVRKQMDGRAMLGVKERVENSNTVSPEEELEPARKKRREQLAYLESEEFQKILKAKSKHTDILKEAEAELQKSYFEPLVKKEQMEEKMRATREVKCRVVTCRTCTYTHFKPLETCVSEQHNLHWHDGVKRFFKCPCGNRTISLDKLPNKHCRNCGLYKWERDGMLKEKTGPKIGGETLLPRGEEHAKFLNSLK.

Residues 1-153 (MDVEEDDLCL…LQEPPDSSLQ (153 aa)) form an N-terminal domain region. The interval 23-260 (PCSSEKDKSL…SGDRPQQVSQ (238 aa)) is disordered. Residues 37 to 56 (GDPDEFDELFDADGDGESYT) show a composition bias toward acidic residues. Positions 63-74 (EEGKTGNQEERL) are enriched in basic and acidic residues. Over residues 80–89 (DVEDLTDDEV) the composition is skewed to acidic residues. T85 is subject to Phosphothreonine. Positions 101 to 139 (PAPSQEKTSEELQDELKKLQEQMKSLQEQLKAASIKQPP) form a coiled coil. Residues 107–121 (KTSEELQDELKKLQE) are compositionally biased toward basic and acidic residues. Residues 181–190 (KAKRVARKPK) are compositionally biased toward basic residues. Positions 193-217 (AESSSRMRTPAQPLQVSSSFLEPNH) are enriched in polar residues. The span at 218–228 (SSSSRSSTPSP) shows a compositional bias: low complexity. A compositionally biased stretch (polar residues) spans 236–260 (CSRTIRNQNTVSPGNSGDRPQQVSQ). Residues 251–405 (SGDRPQQVSQ…IMGEAMDLGA (155 aa)) form an OB-fold domain region. The segment at 406-431 (CKAKKKNGEPCTQTVNLHDCEYCQYH) is zinc finger-like 1. The tract at residues 579 to 642 (QQMLEMRKRR…ATPRMPKLGR (64 aa)) is disordered. Over residues 603–621 (VQSPAVPSSSRQAAAQSPR) the composition is skewed to low complexity. K639 participates in a covalent cross-link: Glycyl lysine isopeptide (Lys-Gly) (interchain with G-Cter in SUMO2). Position 656 is a phosphoserine (S656). Residues K772 and K773 each participate in a glycyl lysine isopeptide (Lys-Gly) (interchain with G-Cter in SUMO2) cross-link. 2 zinc finger-like regions span residues 793-812 (CRTC…SEQH) and 826-846 (CPCG…CRNC).

This sequence belongs to the MCM10 family. In terms of assembly, self-associates. Interacts with ORC2. May interact with MCM2 and MCM6. Interacts with the DNA polymerase alpha subunit POLA1. Interacts with RECQL4; this interaction regulates RECQL4 unwinding activity. Interacts with WDHD1.

It is found in the nucleus. Acts as a replication initiation factor that brings together the MCM2-7 helicase and the DNA polymerase alpha/primase complex in order to initiate DNA replication. Additionally, plays a role in preventing DNA damage during replication. Key effector of the RBBP6 and ZBTB38-mediated regulation of DNA-replication and common fragile sites stability; acts as a direct target of transcriptional repression by ZBTB38. The sequence is that of Protein MCM10 homolog (Mcm10) from Mus musculus (Mouse).